The following is a 202-amino-acid chain: uncharacterized protein (202 aa).

An Isoglutamyl lysine isopeptide (Lys-Gln) (interchain with Q-Cter in protein Pup) cross-link involves residue lysine 136.

This is an uncharacterized protein from Mycobacterium tuberculosis (strain CDC 1551 / Oshkosh).